A 324-amino-acid polypeptide reads, in one-letter code: Elongation factor Ts, mitochondrial (324 aa).

Residues 1–44 constitute a mitochondrion transit peptide; the sequence is MSLLRSLRFFPVACTGRSARAVLLQPSQPWLTFHAGPSLSSAAS. 3 positions are modified to N6-succinyllysine: K75, K132, and K191. S269 carries the post-translational modification Phosphoserine.

This sequence belongs to the EF-Ts family.

Its subcellular location is the mitochondrion. Functionally, associates with the EF-Tu.GDP complex and induces the exchange of GDP to GTP. It remains bound to the aminoacyl-tRNA.EF-Tu.GTP complex up to the GTP hydrolysis stage on the ribosome. The sequence is that of Elongation factor Ts, mitochondrial (Tsfm) from Mus musculus (Mouse).